Reading from the N-terminus, the 372-residue chain is N-methyl-L-tryptophan oxidase (372 aa).

4–34 lines the FAD pocket; it reads DLIIIGSGSVGAAAGYYATRAGLKVLMTDAH. C307 is subject to S-8alpha-FAD cysteine.

The protein belongs to the MSOX/MTOX family. MTOX subfamily. Monomer. The cofactor is FAD.

The enzyme catalyses N(alpha)-methyl-L-tryptophan + O2 + H2O = L-tryptophan + formaldehyde + H2O2. Catalyzes the oxidative demethylation of N-methyl-L-tryptophan. The protein is N-methyl-L-tryptophan oxidase of Salmonella heidelberg (strain SL476).